A 99-amino-acid polypeptide reads, in one-letter code: Small ribosomal subunit protein bS18 (99 aa).

This sequence belongs to the bacterial ribosomal protein bS18 family. As to quaternary structure, part of the 30S ribosomal subunit. Forms a tight heterodimer with protein bS6.

In terms of biological role, binds as a heterodimer with protein bS6 to the central domain of the 16S rRNA, where it helps stabilize the platform of the 30S subunit. The sequence is that of Small ribosomal subunit protein bS18 from Christiangramia forsetii (strain DSM 17595 / CGMCC 1.15422 / KT0803) (Gramella forsetii).